The sequence spans 261 residues: MVETKPKPTEVQKKKTLYEVMFKSREFIIDVYLRFDCFIYLILGGFGFYQPSNLITLLNYSKSDLGLFNNTDSSISNNNNNNNNINTEEQYSTYDNNLLDNQNEFQIDNNNNNNNNEFIPLYQNPILISVVTMYTLMVSLVAIFQCLISLLALIQKEKSTKSILINLSLTLNFFLLLFNTYVLSTQSEIFSKFAYMGLIVSYIISLLDFSALFFLTSKHKSVLSVISSIFSFFLMCLKVRPKLPKLPKLNSNNNNGNKKKK.

A run of 5 helical transmembrane segments spans residues 38–58, 134–154, 163–183, 195–215, and 219–239; these read FIYL…ITLL, YTLM…LALI, ILIN…TYVL, YMGL…LFFL, and HKSV…CLKV.

Its subcellular location is the membrane. This is an uncharacterized protein from Dictyostelium discoideum (Social amoeba).